Reading from the N-terminus, the 560-residue chain is MKDMSIPLLAAVSSSTEETVRPIADFHPTLWGNHFLKSAADVETIDAATQEQHAALKQEVRRMITTTANKLAQKLHMIDAVQRLGVAYHFEKEIEDELGKVSHDLDSDDLYVVSLRFRLFRQQGVKISCDVFDKFKDDEGKFKESLINDIRGMLSLYEAAYLAIRGEDILDEAIVFTTTHLKSVISISDHSHANSNLAEQIRHSLQIPLRKAAARLEARYFLDIYSRDDLHDETLLKFAKLDFNILQAAHQKEASIMTRWWNDLGFPKKVPYARDRIIETYIWMLLGVSYEPNLAFGRIFASKVVCMITTIDDTFDAYGTFEELTLFTEAVTRWDIGLIDTLPEYMKFIVKALLDIYREAEEELAKEGRSYGIPYAKQMMQELIILYFTEAKWLYKGYVPTFDEYKSVALRSIGLRTLAVASFVDLGDFIATKDNFECILKNAKSLKATETIGRLMDDIAGYKFEQKRGHNPSAVECYKNQHGVSEEEAVKELLLEVANSWKDINEELLNPTTVPLPMLQRLLYFARSGHFIYDDGHDRYTHSLMMKRQVALLLTEPLAI.

4 residues coordinate Mg(2+): Asp-312, Asp-316, Asp-457, and Glu-465. The DDXXD motif motif lies at Asp-312 to Asp-316.

This sequence belongs to the terpene synthase family. It depends on Mg(2+) as a cofactor. Co(2+) serves as cofactor. The cofactor is Mn(2+).

Its subcellular location is the cytoplasm. The enzyme catalyses (2E,6E)-farnesyl diphosphate = (E)-beta-farnesene + diphosphate. Its pathway is secondary metabolite biosynthesis; terpenoid biosynthesis. Its function is as follows. Sesquiterpene cyclase catalyzing the production of beta-farnesene from farnesyl diphosphate. This is (E)-beta-farnesene synthase from Citrus junos (Yuzu).